The chain runs to 242 residues: tRNA (guanine-N(1)-)-methyltransferase (242 aa).

S-adenosyl-L-methionine contacts are provided by residues Gly111 and 130-135 (IGDYVL).

The protein belongs to the RNA methyltransferase TrmD family. In terms of assembly, homodimer.

The protein localises to the cytoplasm. It carries out the reaction guanosine(37) in tRNA + S-adenosyl-L-methionine = N(1)-methylguanosine(37) in tRNA + S-adenosyl-L-homocysteine + H(+). Its function is as follows. Specifically methylates guanosine-37 in various tRNAs. This is tRNA (guanine-N(1)-)-methyltransferase from Aster yellows witches'-broom phytoplasma (strain AYWB).